A 424-amino-acid polypeptide reads, in one-letter code: Histidine--tRNA ligase (424 aa).

The protein belongs to the class-II aminoacyl-tRNA synthetase family. In terms of assembly, homodimer.

The protein localises to the cytoplasm. It catalyses the reaction tRNA(His) + L-histidine + ATP = L-histidyl-tRNA(His) + AMP + diphosphate + H(+). This Shewanella sediminis (strain HAW-EB3) protein is Histidine--tRNA ligase.